The chain runs to 69 residues: uncharacterized protein (69 aa).

The Cytoplasmic segment spans residues M1 to K15. A helical transmembrane segment spans residues L16–Y36. The Extracellular segment spans residues M37–Y69. An N-linked (GlcNAc...) asparagine; by host glycan is attached at N51.

Belongs to the asfivirus X69R family.

It is found in the host membrane. This is an uncharacterized protein from Ornithodoros (relapsing fever ticks).